The following is a 154-amino-acid chain: YCYICHSLKYDRWYSNRNSLCCVFLICVLTLVAIVPNLCMGTLQYDPRIYSCTFAQSVSSAYTIAVVVFHFLVPMVIVIFRYLRIWVLVLQIRWRAKPENNPRLKPQDFRNFVTMFVVFVLFAICWAPLNFIGLAVASDPASMAPRIPEWLFVA.

Residues 1–19 (YCYICHSLKYDRWYSNRNS) lie on the Cytoplasmic side of the membrane. A helical membrane pass occupies residues 20–40 (LCCVFLICVLTLVAIVPNLCM). At 41-62 (GTLQYDPRIYSCTFAQSVSSAY) the chain is on the extracellular side. A helical transmembrane segment spans residues 63 to 83 (TIAVVVFHFLVPMVIVIFRYL). Over 84 to 115 (RIWVLVLQIRWRAKPENNPRLKPQDFRNFVTM) the chain is Cytoplasmic. The chain crosses the membrane as a helical span at residues 116–136 (FVVFVLFAICWAPLNFIGLAV). The Extracellular portion of the chain corresponds to 137-149 (ASDPASMAPRIPE).

It belongs to the G-protein coupled receptor 1 family.

The protein localises to the cell membrane. Functionally, high affinity receptor for melatonin. Likely to mediate the reproductive and circadian actions of melatonin. The activity of this receptor is mediated by pertussis toxin sensitive G proteins that inhibit adenylate cyclase activity. The polypeptide is Melatonin receptor type 1A (MTNR1A) (Sus scrofa (Pig)).